The sequence spans 310 residues: Lipoyl synthase (310 aa).

7 residues coordinate [4Fe-4S] cluster: C61, C66, C72, C87, C91, C94, and S300. Positions 73–289 (FNNGTATFMI…EYIALSLGFS (217 aa)) constitute a Radical SAM core domain.

The protein belongs to the radical SAM superfamily. Lipoyl synthase family. It depends on [4Fe-4S] cluster as a cofactor.

Its subcellular location is the cytoplasm. It carries out the reaction [[Fe-S] cluster scaffold protein carrying a second [4Fe-4S](2+) cluster] + N(6)-octanoyl-L-lysyl-[protein] + 2 oxidized [2Fe-2S]-[ferredoxin] + 2 S-adenosyl-L-methionine + 4 H(+) = [[Fe-S] cluster scaffold protein] + N(6)-[(R)-dihydrolipoyl]-L-lysyl-[protein] + 4 Fe(3+) + 2 hydrogen sulfide + 2 5'-deoxyadenosine + 2 L-methionine + 2 reduced [2Fe-2S]-[ferredoxin]. The protein operates within protein modification; protein lipoylation via endogenous pathway; protein N(6)-(lipoyl)lysine from octanoyl-[acyl-carrier-protein]: step 2/2. Its function is as follows. Catalyzes the radical-mediated insertion of two sulfur atoms into the C-6 and C-8 positions of the octanoyl moiety bound to the lipoyl domains of lipoate-dependent enzymes, thereby converting the octanoylated domains into lipoylated derivatives. This is Lipoyl synthase from Buchnera aphidicola subsp. Cinara cedri (strain Cc).